A 522-amino-acid polypeptide reads, in one-letter code: Penicillin-sensitive carboxypeptidase A (522 aa).

Ser-94 serves as the catalytic Acyl-ester intermediate. Residue Lys-97 is the Proton acceptor of the active site. Residue Ser-351 is part of the active site. Position 461 (Lys-461) interacts with substrate.

This sequence belongs to the peptidase S13 family.

It catalyses the reaction Preferential cleavage: (Ac)2-L-Lys-D-Ala-|-D-Ala. Also transpeptidation of peptidyl-alanyl moieties that are N-acyl substituents of D-alanine.. Inhibited by penicillin G. Its function is as follows. Carboxypeptidase. This chain is Penicillin-sensitive carboxypeptidase A (pscA), found in Dictyostelium discoideum (Social amoeba).